The sequence spans 619 residues: CREB-regulated transcription coactivator 3 (619 aa).

Serine 4 and serine 62 each carry phosphoserine. The segment at 129–148 (SQHLDESWPRQQPPWKEEKH) is disordered. Threonine 160 bears the Phosphothreonine mark. Serine 162 carries the phosphoserine; by SIK2 modification. Lysine 232 participates in a covalent cross-link: Glycyl lysine isopeptide (Lys-Gly) (interchain with G-Cter in SUMO2). Phosphoserine is present on residues serine 273, serine 329, serine 332, serine 370, serine 391, serine 396, and serine 410. The interval 375–478 (STTNLSGPSR…TQQPQAAPSL (104 aa)) is disordered. The interval 380-401 (SGPSRRRQPPVSPLTLSPGPEA) is required for interaction with PPP2CA and PPP2R1A. Polar residues-rich tracts occupy residues 405 to 415 (FSRQLSATSPL) and 422 to 431 (QMVTSEQSPL). The residue at position 443 (serine 443) is a Phosphoserine. The segment covering 443–454 (SPPPPYPTPQEL) has biased composition (pro residues). Residues 455–478 (PQPLLQQPHAQEPPTQQPQAAPSL) are compositionally biased toward low complexity.

The protein belongs to the TORC family. Binding, as a tetramer, through its N-terminal region, with the bZIP domain of CREB1 enhances recruitment of TAF4 to the promoter. 'Arg-314' in the bZIP domain of CREB1 is essential for this interaction. Interacts (when phosphorylated at Ser-162 and Se-273) with 14-3-3 proteins. Interacts with YWHAE. Interacts (when phosphorylated at Ser-391) with phosphatase PP2A catalytic subunit PPP2CA and regulatory subunits PPP2R1A and PPP2R2A. Post-translationally, phosphorylation/dephosphorylation states of Ser-273 are required for regulating transduction of CREB activity. CRTCs/TORCs are inactive when phosphorylated, and active when dephosphorylated at this site. May be phosphorylated at Ser-391 by MAPK3/ERK1 and/or MAPK1/ERK2 or by some cyclin-dependent kinases such as CDK1,CDK2 or CDK5. Following adenylyl cyclase activation, dephosphorylated at Ser-162 and Ser-273 resulting in its dissociation from 14-3-3 proteins probably promoting CRTC3 translocation into the nucleus. Expressed in brown adipose tissues.

Its subcellular location is the nucleus. It is found in the cytoplasm. Functionally, transcriptional coactivator for CREB1 which activates transcription through both consensus and variant cAMP response element (CRE) sites. Acts as a coactivator, in the SIK/TORC signaling pathway, being active when dephosphorylated. Acts independently of CREB1 'Ser-133' phosphorylation. Enhances the interaction of CREB1 with TAF4. Regulates the expression of specific CREB-activated genes such as the steroidogenic gene, StAR. Potent coactivator of PPARGC1A and inducer of mitochondrial biogenesis in muscle cells. This chain is CREB-regulated transcription coactivator 3 (Crtc3), found in Mus musculus (Mouse).